The primary structure comprises 259 residues: Polycomb group RING finger protein 1 (259 aa).

An RING-type zinc finger spans residues C45 to N84.

As to quaternary structure, component of a PRC1-like complex.

The protein resides in the nucleus. In terms of biological role, component of a Polycomb group (PcG) multiprotein PRC1-like complex, a complex class required to maintain the transcriptionally repressive state of many genes, including Hox genes, throughout development. PcG PRC1 complex acts via chromatin remodeling and modification of histones; it mediates monoubiquitination of histone H2A 'Lys-119', rendering chromatin heritably changed in its expressibility. The polypeptide is Polycomb group RING finger protein 1 (pcgf1) (Xenopus tropicalis (Western clawed frog)).